The chain runs to 249 residues: RNA-free ribonuclease P (249 aa).

Residues 226–249 (NENEPEYENRDKSKEGSSGEIEFI) form a disordered region. Over residues 232-242 (YENRDKSKEGS) the composition is skewed to basic and acidic residues.

Belongs to the HARP family.

It carries out the reaction Endonucleolytic cleavage of RNA, removing 5'-extranucleotides from tRNA precursor.. Its function is as follows. RNA-free RNase P that catalyzes the removal of the 5'-leader sequence from pre-tRNA to produce the mature 5'-terminus. In Methanosarcina barkeri (strain Fusaro / DSM 804), this protein is RNA-free ribonuclease P.